A 485-amino-acid polypeptide reads, in one-letter code: MLRIYNSLTRRKEEFIPIESGKVRMYVCGMTVYDLCHVGHARVMVVFDMVVRYLRASGFEVIYVRNITDIDDKIIHRANERGESIHTLTARYIQALHEDEASLQILPPDREPRATESMEAILAMVRQLLDQGYAYQGENGDIYYDVSHFEGYGALSGRHLEDLRAGERVQVNEAKTDPLDFVLWKAAKSGEPAWESPWGPGRPGWHIECSAMSIQELGTHFDIHGGGQDLQFPHHENEIAQSEAATGGKFVNYWMHNGFVRLNDEKMSKSLGNFFTVREVLEHYHPEVLRYFILSSHYRSPLNYTKQQLDTAKAAMTRLYTALRGIPRGEDRASAQGLSWEFTDGGDPFVLRFREAMDDDFNTPEALALLNEVRHALNRAREAGDTEKGQSLAVLLRSLGGILGLLAHEPEQFLRDSRQVAAIPDTAAAGEEAVLSHDGIEQLVAQRTVARKNKDWAEADRIRGILKDQGITLEDTAAGTLWRRG.

Cysteine 28 serves as a coordination point for Zn(2+). Positions 30-40 (MTVYDLCHVGH) match the 'HIGH' region motif. Positions 209, 234, and 238 each coordinate Zn(2+). A 'KMSKS' region motif is present at residues 266-270 (KMSKS). Residue lysine 269 participates in ATP binding.

This sequence belongs to the class-I aminoacyl-tRNA synthetase family. In terms of assembly, monomer. Zn(2+) is required as a cofactor.

It localises to the cytoplasm. It carries out the reaction tRNA(Cys) + L-cysteine + ATP = L-cysteinyl-tRNA(Cys) + AMP + diphosphate. This is Cysteine--tRNA ligase from Nitrosococcus oceani (strain ATCC 19707 / BCRC 17464 / JCM 30415 / NCIMB 11848 / C-107).